The chain runs to 368 residues: Peptide chain release factor 2 (368 aa).

Q250 is modified (N5-methylglutamine).

It belongs to the prokaryotic/mitochondrial release factor family. In terms of processing, methylated by PrmC. Methylation increases the termination efficiency of RF2.

The protein resides in the cytoplasm. In terms of biological role, peptide chain release factor 2 directs the termination of translation in response to the peptide chain termination codons UGA and UAA. The chain is Peptide chain release factor 2 from Rickettsia africae (strain ESF-5).